The primary structure comprises 78 residues: DNA-directed RNA polymerase subunit Rpo5 (78 aa).

It belongs to the archaeal Rpo5/eukaryotic RPB5 RNA polymerase subunit family. Part of the RNA polymerase complex.

Its subcellular location is the cytoplasm. The enzyme catalyses RNA(n) + a ribonucleoside 5'-triphosphate = RNA(n+1) + diphosphate. DNA-dependent RNA polymerase (RNAP) catalyzes the transcription of DNA into RNA using the four ribonucleoside triphosphates as substrates. This Methanosarcina acetivorans (strain ATCC 35395 / DSM 2834 / JCM 12185 / C2A) protein is DNA-directed RNA polymerase subunit Rpo5.